A 599-amino-acid chain; its full sequence is Proteasome-associated ATPase (599 aa).

Residues 1–22 (MPHGHPGSQPDEGGELSNGSSS) are disordered. Residues 21 to 97 (SSGELTAQIR…LREEVDRLAQ (77 aa)) adopt a coiled-coil conformation. Residue 286–291 (GCGKTL) coordinates ATP. Residues 598–599 (YL) form a docks into pockets in the proteasome alpha-ring region.

It belongs to the AAA ATPase family. Homohexamer. Assembles into a hexameric ring structure that caps the 20S proteasome core. Strongly interacts with the prokaryotic ubiquitin-like protein Pup through a hydrophobic interface; the interacting region of ARC lies in its N-terminal coiled-coil domain. There is one Pup binding site per ARC hexamer ring. Upon ATP-binding, the C-terminus of ARC interacts with the alpha-rings of the proteasome core, possibly by binding to the intersubunit pockets.

It participates in protein degradation; proteasomal Pup-dependent pathway. In terms of biological role, ATPase which is responsible for recognizing, binding, unfolding and translocation of pupylated proteins into the bacterial 20S proteasome core particle. May be essential for opening the gate of the 20S proteasome via an interaction with its C-terminus, thereby allowing substrate entry and access to the site of proteolysis. Thus, the C-termini of the proteasomal ATPase may function like a 'key in a lock' to induce gate opening and therefore regulate proteolysis. The chain is Proteasome-associated ATPase from Actinosynnema mirum (strain ATCC 29888 / DSM 43827 / JCM 3225 / NBRC 14064 / NCIMB 13271 / NRRL B-12336 / IMRU 3971 / 101).